The sequence spans 884 residues: Alanine--tRNA ligase (884 aa).

Residues histidine 572, histidine 576, cysteine 673, and histidine 677 each coordinate Zn(2+).

This sequence belongs to the class-II aminoacyl-tRNA synthetase family. Requires Zn(2+) as cofactor.

Its subcellular location is the cytoplasm. The catalysed reaction is tRNA(Ala) + L-alanine + ATP = L-alanyl-tRNA(Ala) + AMP + diphosphate. Catalyzes the attachment of alanine to tRNA(Ala) in a two-step reaction: alanine is first activated by ATP to form Ala-AMP and then transferred to the acceptor end of tRNA(Ala). Also edits incorrectly charged Ser-tRNA(Ala) and Gly-tRNA(Ala) via its editing domain. The protein is Alanine--tRNA ligase of Xylella fastidiosa (strain M23).